Reading from the N-terminus, the 419-residue chain is Transcription termination factor Rho (419 aa).

A Rho RNA-BD domain is found at 48-123 (DIFGDGVLEI…LKVNEVNYDK (76 aa)). 3 RNA-binding regions span residues 61–66 (GFGFLR), 78–80 (DIY), and 108–110 (ERY). ATP is bound by residues 169–174 (GRGQRG), 181–186 (KAGKTM), and Arg212. The tract at residues 284-288 (VLTGG) is RNA-binding 2.

The protein belongs to the Rho family. As to quaternary structure, homohexamer. The homohexamer assembles into an open ring structure.

Its function is as follows. Facilitates transcription termination by a mechanism that involves Rho binding to the nascent RNA, activation of Rho's RNA-dependent ATPase activity, and release of the mRNA from the DNA template. This Salmonella typhi protein is Transcription termination factor Rho.